The following is a 296-amino-acid chain: Tyrosine recombinase XerC (296 aa).

The Core-binding (CB) domain maps to 1–84; sequence MNKIQESFLY…TLRSFYEFWM (84 aa). The 182-residue stretch at 105 to 286 folds into the Tyr recombinase domain; the sequence is YLPHFFYEEE…SNQQLRKVYL (182 aa). Residues arginine 145, lysine 169, histidine 238, arginine 241, and histidine 264 contribute to the active site. Catalysis depends on tyrosine 273, which acts as the O-(3'-phospho-DNA)-tyrosine intermediate.

Belongs to the 'phage' integrase family. XerC subfamily. In terms of assembly, forms a cyclic heterotetrameric complex composed of two molecules of XerC and two molecules of XerD.

The protein resides in the cytoplasm. Functionally, site-specific tyrosine recombinase, which acts by catalyzing the cutting and rejoining of the recombining DNA molecules. The XerC-XerD complex is essential to convert dimers of the bacterial chromosome into monomers to permit their segregation at cell division. It also contributes to the segregational stability of plasmids. The protein is Tyrosine recombinase XerC of Staphylococcus carnosus (strain TM300).